Here is a 432-residue protein sequence, read N- to C-terminus: Glutamate-1-semialdehyde 2,1-aminomutase (432 aa).

An N6-(pyridoxal phosphate)lysine modification is found at lysine 272.

The protein belongs to the class-III pyridoxal-phosphate-dependent aminotransferase family. HemL subfamily. As to quaternary structure, homodimer. Pyridoxal 5'-phosphate serves as cofactor.

It localises to the cytoplasm. It catalyses the reaction (S)-4-amino-5-oxopentanoate = 5-aminolevulinate. The protein operates within porphyrin-containing compound metabolism; protoporphyrin-IX biosynthesis; 5-aminolevulinate from L-glutamyl-tRNA(Glu): step 2/2. It participates in porphyrin-containing compound metabolism; chlorophyll biosynthesis. This is Glutamate-1-semialdehyde 2,1-aminomutase from Trichodesmium erythraeum (strain IMS101).